The primary structure comprises 514 residues: 2,3-bisphosphoglycerate-independent phosphoglycerate mutase (514 aa).

The Mn(2+) site is built by aspartate 14 and serine 64. Serine 64 (phosphoserine intermediate) is an active-site residue. Substrate is bound by residues histidine 125, 155 to 156 (RD), arginine 187, arginine 193, 263 to 266 (RADR), and lysine 336. The Mn(2+) site is built by aspartate 403, histidine 407, aspartate 444, histidine 445, and histidine 463.

This sequence belongs to the BPG-independent phosphoglycerate mutase family. In terms of assembly, monomer. It depends on Mn(2+) as a cofactor.

The catalysed reaction is (2R)-2-phosphoglycerate = (2R)-3-phosphoglycerate. Its pathway is carbohydrate degradation; glycolysis; pyruvate from D-glyceraldehyde 3-phosphate: step 3/5. In terms of biological role, catalyzes the interconversion of 2-phosphoglycerate and 3-phosphoglycerate. This Escherichia coli (strain ATCC 8739 / DSM 1576 / NBRC 3972 / NCIMB 8545 / WDCM 00012 / Crooks) protein is 2,3-bisphosphoglycerate-independent phosphoglycerate mutase.